The primary structure comprises 188 residues: Ribosome-recycling factor (188 aa).

Belongs to the RRF family.

Its subcellular location is the cytoplasm. Its function is as follows. Responsible for the release of ribosomes from messenger RNA at the termination of protein biosynthesis. May increase the efficiency of translation by recycling ribosomes from one round of translation to another. The protein is Ribosome-recycling factor of Caulobacter sp. (strain K31).